The sequence spans 357 residues: tRNA pseudouridine synthase Pus10 (357 aa).

The region spanning 1–118 is the THUMP domain; that stretch reads MNLCRECYGI…TFTFELQIRP (118 aa). Residue aspartate 187 is the Nucleophile of the active site. Substrate contacts are provided by tyrosine 251 and tyrosine 322.

The protein belongs to the pseudouridine synthase Pus10 family.

It carries out the reaction uridine(54) in tRNA = pseudouridine(54) in tRNA. The catalysed reaction is uridine(55) in tRNA = pseudouridine(55) in tRNA. Its function is as follows. Responsible for synthesis of pseudouridine from uracil-54 and uracil-55 in the psi GC loop of transfer RNAs. In Archaeoglobus fulgidus (strain ATCC 49558 / DSM 4304 / JCM 9628 / NBRC 100126 / VC-16), this protein is tRNA pseudouridine synthase Pus10.